A 687-amino-acid chain; its full sequence is Immune inhibitor A (687 aa).

A compositionally biased stretch (basic and acidic residues) spans 1 to 12 (MKDAKADTKEKL). The segment at residues 1 to 25 (MKDAKADTKEKLNQPATGTPAATGP) is a signal peptide (or 32). Residues 1–43 (MKDAKADTKEKLNQPATGTPAATGPVKGGLNGKVPTSPAKQKA) form a disordered region. Positions 26 to 40 (VKGGLNGKVPTSPAK) are excised as a propeptide. A Zn(2+)-binding site is contributed by His266. Glu267 is an active-site residue. His270 serves as a coordination point for Zn(2+).

It belongs to the peptidase M6 family. Zn(2+) is required as a cofactor. Requires Ca(2+) as cofactor.

It localises to the secreted. Functionally, neutral metalloprotease that is secreted to degrade antibacterial proteins produced by the insect host for its defense (attacins and cecropins). Probably degrades some unknown crucial protein(s) too, since it is toxic when injected to insect larvae. This chain is Immune inhibitor A (ina), found in Bacillus thuringiensis subsp. alesti.